Consider the following 232-residue polypeptide: EEF1A lysine methyltransferase 3 (232 aa).

S-adenosyl-L-methionine contacts are provided by residues Trp57, 83–85, Asp104, Trp133, and Ala150; that span reads GAG.

Belongs to the methyltransferase superfamily. METTL21 family. As to quaternary structure, interacts with members of the heat shock protein 70 and 90 families and of the TCP-1 chaperonin family, as well as with HSPD1, STIP1 and tubulin; at least some of these proteins may be methylation substrates.

It is found in the cytoplasm. The protein localises to the cytoskeleton. The protein resides in the microtubule organizing center. It localises to the centrosome. The catalysed reaction is L-lysyl-[protein] + 3 S-adenosyl-L-methionine = N(6),N(6),N(6)-trimethyl-L-lysyl-[protein] + 3 S-adenosyl-L-homocysteine + 3 H(+). It catalyses the reaction L-lysyl-[protein] + S-adenosyl-L-methionine = N(6)-methyl-L-lysyl-[protein] + S-adenosyl-L-homocysteine + H(+). The enzyme catalyses N(6)-methyl-L-lysyl-[protein] + S-adenosyl-L-methionine = N(6),N(6)-dimethyl-L-lysyl-[protein] + S-adenosyl-L-homocysteine + H(+). It carries out the reaction N(6),N(6)-dimethyl-L-lysyl-[protein] + S-adenosyl-L-methionine = N(6),N(6),N(6)-trimethyl-L-lysyl-[protein] + S-adenosyl-L-homocysteine + H(+). Its function is as follows. Protein-lysine methyltransferase that selectively mono-, di- and trimethylates 'Lys-165' of the translation elongation factors EEF1A1 and EEF1A2 in an aminoacyl-tRNA and GTP-dependent manner. EEF1A1 methylation by EEF1AKMT3 is dynamic as well as inducible by stress conditions, such as ER-stress, and plays a regulatory role on mRNA translation. This Mus musculus (Mouse) protein is EEF1A lysine methyltransferase 3.